The following is a 340-amino-acid chain: Lipase chaperone (340 aa).

The helical transmembrane segment at Ile4–Pro24 threads the bilayer. A disordered region spans residues Glu29 to Glu51. Residues Pro36 to Glu51 are compositionally biased toward low complexity.

This sequence belongs to the lipase chaperone family.

The protein localises to the cell inner membrane. Functionally, may be involved in the folding of the extracellular lipase during its passage through the periplasm. This chain is Lipase chaperone (lifO), found in Pseudomonas aeruginosa (strain ATCC 15692 / DSM 22644 / CIP 104116 / JCM 14847 / LMG 12228 / 1C / PRS 101 / PAO1).